A 207-amino-acid chain; its full sequence is Ras-related protein Rab-8B (207 aa).

Residues Ser-17, Gly-18, Val-19, Gly-20, Lys-21, Thr-22, Cys-23, Thr-35, Ser-39, and Thr-40 each contribute to the GTP site. A Mg(2+)-binding site is contributed by Thr-22. Short sequence motifs (switch) lie at residues 31 to 45 (DAFN…GIDF) and 63 to 80 (DTAG…YYRG). Residues Thr-40 and Asp-63 each coordinate Mg(2+). Gly-66 provides a ligand contact to GTP. Thr-72 carries the phosphothreonine; by LRRK2 modification. GTP contacts are provided by Asn-121, Lys-122, Asp-124, Ala-152, and Lys-153. Residue Ser-180 is modified to Phosphoserine. Position 204 is a cysteine methyl ester (Cys-204). Residue Cys-204 is the site of S-geranylgeranyl cysteine attachment. A propeptide spans 205–207 (SLL) (removed in mature form).

The protein belongs to the small GTPase superfamily. Rab family. In terms of assembly, associated with actin, delta-catenin and alpha and beta tubulins. Interacts with OTOF. Interacts with PEX5R. Interacts with RAB3IP. Interacts with VIM. Interacts with CDH1. Interacts with MICALL2. Interacts with GDI1, GDI2, CHML and CHM; phosphorylation at Thr-72 disrupts these interactions. Interacts with MICAL1. The cofactor is Mg(2+). Post-translationally, phosphorylation of Thr-72 in the switch II region by LRRK2 prevents the association of RAB regulatory proteins, including CHM, CHML and RAB GDP dissociation inhibitors GDI1 and GDI2.

The protein localises to the cell membrane. Its subcellular location is the cytoplasmic vesicle. The protein resides in the phagosome. It is found in the phagosome membrane. It localises to the endosome membrane. The catalysed reaction is GTP + H2O = GDP + phosphate + H(+). With respect to regulation, regulated by guanine nucleotide exchange factors (GEFs) including RAB3IP/RABIN8 which promotes the exchange of bound GDP for free GTP. Regulated by GTPase activating proteins (GAPs) which increase the GTP hydrolysis activity. Inhibited by GDP dissociation inhibitors (GDIs). Its function is as follows. The small GTPases Rab are key regulators of intracellular membrane trafficking, from the formation of transport vesicles to their fusion with membranes. Rabs cycle between an inactive GDP-bound form and an active GTP-bound form that is able to recruit to membranes different sets of downstream effectors directly responsible for vesicle formation, movement, tethering and fusion. RAB8B may be involved in polarized vesicular trafficking and neurotransmitter release. May participate in cell junction dynamics in Sertoli cells. May also participate in the export of a subset of neosynthesized proteins through a Rab8-Rab10-Rab11-dependent endososomal export route. This is Ras-related protein Rab-8B from Homo sapiens (Human).